Here is a 152-residue protein sequence, read N- to C-terminus: UPF0756 membrane protein CA_C0092 (152 aa).

4 consecutive transmembrane segments (helical) span residues 5–25 (IILV…VAIS), 50–70 (MFWG…QGNV), 82–102 (FVGI…GVGL), and 117–137 (LILG…GPLI).

It belongs to the UPF0756 family.

Its subcellular location is the cell membrane. The protein is UPF0756 membrane protein CA_C0092 of Clostridium acetobutylicum (strain ATCC 824 / DSM 792 / JCM 1419 / IAM 19013 / LMG 5710 / NBRC 13948 / NRRL B-527 / VKM B-1787 / 2291 / W).